The primary structure comprises 71 residues: Small ribosomal subunit protein bS21 (71 aa).

Positions 48 to 59 (EKASLAKRHAKR) are enriched in basic residues. The tract at residues 48–71 (EKASLAKRHAKRNARENARNTRLY) is disordered. Residues 60–71 (NARENARNTRLY) are compositionally biased toward basic and acidic residues.

It belongs to the bacterial ribosomal protein bS21 family.

This is Small ribosomal subunit protein bS21 from Actinobacillus pleuropneumoniae serotype 5b (strain L20).